Reading from the N-terminus, the 403-residue chain is Acetate kinase (403 aa).

A Mg(2+)-binding site is contributed by N7. K14 is a binding site for ATP. Substrate is bound at residue R95. D152 (proton donor/acceptor) is an active-site residue. ATP-binding positions include H212 to G216, D286 to R288, and G335 to N339. E389 is a Mg(2+) binding site.

Belongs to the acetokinase family. In terms of assembly, homodimer. Mg(2+) serves as cofactor. It depends on Mn(2+) as a cofactor.

Its subcellular location is the cytoplasm. The catalysed reaction is acetate + ATP = acetyl phosphate + ADP. Its pathway is metabolic intermediate biosynthesis; acetyl-CoA biosynthesis; acetyl-CoA from acetate: step 1/2. Functionally, catalyzes the formation of acetyl phosphate from acetate and ATP. Can also catalyze the reverse reaction. The chain is Acetate kinase from Desulfovibrio desulfuricans (strain ATCC 27774 / DSM 6949 / MB).